The following is a 54-amino-acid chain: MRELDEMISRLRNRGIKVEKVKYPKQTLSEKKWVHQCKQPLKTNYRDFNGYSFT.

In terms of assembly, interacts with SpxH.

In terms of biological role, inhibitor of Spx proteolytic control. Acts by interacting with SpxH/YjbH, which disrupts interaction between SpxH and Spx, and inhibits SpxH-enhanced proteolysis of Spx by ClpXP. Required for the stabilization of Spx and activation of Spx-regulated genes in response to cell wall stress. The polypeptide is Anti-adapter protein SpxO (Bacillus subtilis (strain 168)).